Here is a 59-residue protein sequence, read N- to C-terminus: Large ribosomal subunit protein bL35 (59 aa).

Basic residues predominate over residues 17-43 (GQIKRKHAYTSHLAPHKSTKQKRHLRK). A disordered region spans residues 17–47 (GQIKRKHAYTSHLAPHKSTKQKRHLRKQATV).

Belongs to the bacterial ribosomal protein bL35 family.

The polypeptide is Large ribosomal subunit protein bL35 (Mycoplasma genitalium (strain ATCC 33530 / DSM 19775 / NCTC 10195 / G37) (Mycoplasmoides genitalium)).